A 596-amino-acid polypeptide reads, in one-letter code: Arginine--tRNA ligase (596 aa).

Positions 127 to 137 match the 'HIGH' region motif; sequence ANPTGPVHVGR.

The protein belongs to the class-I aminoacyl-tRNA synthetase family.

Its subcellular location is the cytoplasm. It carries out the reaction tRNA(Arg) + L-arginine + ATP = L-arginyl-tRNA(Arg) + AMP + diphosphate. The sequence is that of Arginine--tRNA ligase from Haloquadratum walsbyi (strain DSM 16790 / HBSQ001).